Reading from the N-terminus, the 593-residue chain is Aspartate--tRNA ligase (593 aa).

E180 contributes to the L-aspartate binding site. Residues Q204–K207 are aspartate. R226 serves as a coordination point for L-aspartate. ATP-binding positions include R226–E228 and Q235. L-aspartate is bound at residue H454. An ATP-binding site is contributed by E488. R495 serves as a coordination point for L-aspartate. Position 540-543 (G540–R543) interacts with ATP.

Belongs to the class-II aminoacyl-tRNA synthetase family. Type 1 subfamily. Homodimer.

It localises to the cytoplasm. The enzyme catalyses tRNA(Asp) + L-aspartate + ATP = L-aspartyl-tRNA(Asp) + AMP + diphosphate. Catalyzes the attachment of L-aspartate to tRNA(Asp) in a two-step reaction: L-aspartate is first activated by ATP to form Asp-AMP and then transferred to the acceptor end of tRNA(Asp). The protein is Aspartate--tRNA ligase of Clostridium novyi (strain NT).